We begin with the raw amino-acid sequence, 243 residues long: Small ribosomal subunit protein eS4 (243 aa).

In terms of domain architecture, S4 RNA-binding spans 43-105 (IPLLYIVRDY…TGEHYRVLPN (63 aa)).

It belongs to the eukaryotic ribosomal protein eS4 family.

The sequence is that of Small ribosomal subunit protein eS4 (rps4e) from Pyrococcus horikoshii (strain ATCC 700860 / DSM 12428 / JCM 9974 / NBRC 100139 / OT-3).